The chain runs to 403 residues: S-adenosylmethionine synthase (403 aa).

His-15 serves as a coordination point for ATP. Asp-17 contributes to the Mg(2+) binding site. Glu-43 serves as a coordination point for K(+). Residues Glu-56 and Gln-99 each contribute to the L-methionine site. A flexible loop region spans residues 99-109 (QSPDINQGVDR). ATP is bound by residues 166-168 (DAK), 232-233 (KF), Asp-241, 247-248 (RK), Ala-264, and Lys-268. Asp-241 contributes to the L-methionine binding site. Lys-272 is a binding site for L-methionine.

Belongs to the AdoMet synthase family. Homotetramer; dimer of dimers. Mg(2+) serves as cofactor. It depends on K(+) as a cofactor.

It localises to the cytoplasm. The enzyme catalyses L-methionine + ATP + H2O = S-adenosyl-L-methionine + phosphate + diphosphate. It participates in amino-acid biosynthesis; S-adenosyl-L-methionine biosynthesis; S-adenosyl-L-methionine from L-methionine: step 1/1. Catalyzes the formation of S-adenosylmethionine (AdoMet) from methionine and ATP. The overall synthetic reaction is composed of two sequential steps, AdoMet formation and the subsequent tripolyphosphate hydrolysis which occurs prior to release of AdoMet from the enzyme. In Xylella fastidiosa (strain Temecula1 / ATCC 700964), this protein is S-adenosylmethionine synthase.